Consider the following 120-residue polypeptide: NAD(P)H-quinone oxidoreductase subunit 3 (120 aa).

Transmembrane regions (helical) follow at residues 10 to 30 (FLGF…TNLI), 64 to 84 (MFAL…PWAV), and 89 to 109 (LGLL…IALA).

The protein belongs to the complex I subunit 3 family. In terms of assembly, NDH-1 can be composed of about 15 different subunits; different subcomplexes with different compositions have been identified which probably have different functions.

It localises to the cellular thylakoid membrane. The catalysed reaction is a plastoquinone + NADH + (n+1) H(+)(in) = a plastoquinol + NAD(+) + n H(+)(out). It catalyses the reaction a plastoquinone + NADPH + (n+1) H(+)(in) = a plastoquinol + NADP(+) + n H(+)(out). NDH-1 shuttles electrons from an unknown electron donor, via FMN and iron-sulfur (Fe-S) centers, to quinones in the respiratory and/or the photosynthetic chain. The immediate electron acceptor for the enzyme in this species is believed to be plastoquinone. Couples the redox reaction to proton translocation, and thus conserves the redox energy in a proton gradient. Cyanobacterial NDH-1 also plays a role in inorganic carbon-concentration. This Prochlorococcus marinus (strain MIT 9215) protein is NAD(P)H-quinone oxidoreductase subunit 3.